The following is a 185-amino-acid chain: Sarcoplasmic calcium-binding proteins II, V, VI, and VII (185 aa).

4 EF-hand domains span residues 5–41 (FQKQ…YKEV), 57–92 (SLED…TIAT), 102–137 (WCQN…FQLQ), and 138–173 (CADV…TSPA). Ca(2+)-binding residues include aspartate 19, asparagine 21, aspartate 23, serine 25, aspartate 30, aspartate 70, asparagine 72, aspartate 74, glutamate 81, aspartate 115, serine 117, aspartate 119, and glutamate 126.

Like parvalbumins, SCPs seem to be more abundant in fast contracting muscles, but no functional relationship can be established from this distribution. This is Sarcoplasmic calcium-binding proteins II, V, VI, and VII from Branchiostoma lanceolatum (Common lancelet).